A 259-amino-acid polypeptide reads, in one-letter code: UPF0246 protein VF_2109 (259 aa).

Belongs to the UPF0246 family.

This chain is UPF0246 protein VF_2109, found in Aliivibrio fischeri (strain ATCC 700601 / ES114) (Vibrio fischeri).